A 199-amino-acid chain; its full sequence is Recombination protein RecR (199 aa).

The segment at 57–72 (CPICGNITEKEICDIC) adopts a C4-type zinc-finger fold. A Toprim domain is found at 80–176 (TTIMVVEQPK…KVTRLAAGLS (97 aa)).

The protein belongs to the RecR family.

Functionally, may play a role in DNA repair. It seems to be involved in an RecBC-independent recombinational process of DNA repair. It may act with RecF and RecO. The chain is Recombination protein RecR from Lactobacillus acidophilus (strain ATCC 700396 / NCK56 / N2 / NCFM).